Here is an 859-residue protein sequence, read N- to C-terminus: LQGLPGKDGETGAAGPLDPGPVGERGEQGAPGPSGFQGLPGPPGPPGESGKPGDQGVPGEAGAPGLVGPRGERGFPGERGSPGAQGLQGPRGLPGTPGTDGPKGATGPAGPNGAQGPPGLQGMPGERGAAGIAGPKGDRGDVGEKGPEGAPGKDGARGLTGPIGPPGPAGPNGEKGESGPPGPSGAAGARGAPGERGEPGAPGPAGFAGPPGADGQPGAKGEQGEPGQKGDAGAPGPQGPSGAPGPQGPTGVTGPKGARGAQGPPGATGFPGAAGRVGPPGPNGNPGPPGPPGSAGKDGPKGVRGDAGPPGRAGDPGLQGPAGPPGEKGEPGEDGPAGPDGPPGPQGLAGQRGIVGLPGQRGERGFPGLPGPSGEPGKQGAPGSAGDRGPPGPVGPPGLTGPAGEPGREGNPGADGPPGRDGAAGVKGDRGETGPVGAPGAPGAPGAPGPVGPTGKQGDRGETGAQGPMGPSGPAGARGMPGPQGPRGDKGETGEAGERGLKGHRGFTGLQGLPGPPGPSGDQGAAGPAGPSGPRGPPGPVGPSGKDGSNGMPGPIGPPGPRGRSGEPGPAGPPGNPGPPGPPGPPGTGIDMSAFAGLGQTEKGPDPIRYMRADEAAGGLRQHDVEVDATLKSLNNQIESIRSPEGSKKNPARTCRDIKLCHPEWKSGDYWIDPNQGCTLDAIKVFCNMETGETCVYPTPSSIPRKNWWTSKTKDKKHVWFAETINGGFHFSYGDENLSPNTASIQMTFLRLLSTEGSQNVTYHCKNSIAYMDEETGNLKKAILIQGSNDVEIRAEGNSRFTYSVLEDGCTKHTGKWGKTVIEYRSQKTSRLPIVDIAPMDIGGADQEFGVDIGPVCFL.

The tract at residues 1–607 is disordered; that stretch reads LQGLPGKDGE…LGQTEKGPDP (607 aa). 2 positions are modified to 4-hydroxyproline: proline 31 and proline 40. Proline 42 is modified (3-hydroxyproline). 2 positions are modified to 4-hydroxyproline: proline 43 and proline 46. Residues 78-121 show a composition bias toward low complexity; that stretch reads ERGSPGAQGLQGPRGLPGTPGTDGPKGATGPAGPNGAQGPPGLQ. Basic and acidic residues predominate over residues 136–147; that stretch reads KGDRGDVGEKGP. Low complexity-rich tracts occupy residues 204-220 and 249-277; these read PAGFAGPPGADGQPGAK and PTGVTGPKGARGAQGPPGATGFPGAAGRV. 3-hydroxyproline is present on proline 279. Residues 279 to 292 show a composition bias toward pro residues; that stretch reads PPGPNGNPGPPGPP. 3 positions are modified to 4-hydroxyproline: proline 280, proline 286, and proline 292. Residues 306-321 are compositionally biased toward low complexity; sequence DAGPPGRAGDPGLQGP. Residues 487-501 show a composition bias toward basic and acidic residues; sequence RGDKGETGEAGERGL. Positions 491 to 586 are triple-helical region; the sequence is GETGEAGERG…PGPPGPPGPP (96 aa). Proline 516 carries the 3-hydroxyproline modification. Low complexity predominate over residues 520-529; sequence SGDQGAAGPA. A 4-hydroxyproline modification is found at proline 553. Position 558 is a 3-hydroxyproline (proline 558). 4-hydroxyproline is present on proline 559. Residues 570–586 show a composition bias toward pro residues; the sequence is PAGPPGNPGPPGPPGPP. Proline 573 bears the 3-hydroxyproline mark. Proline 574 and proline 577 each carry 4-hydroxyproline. Proline 579 is modified (3-hydroxyproline). 4-hydroxyproline occurs at positions 580 and 583. Proline 585 carries the post-translational modification 3-hydroxyproline. Proline 586 carries the 4-hydroxyproline modification. A nonhelical region (C-terminal) region spans residues 587–613; that stretch reads GTGIDMSAFAGLGQTEKGPDPIRYMRA. Positions 614 to 859 are cleaved as a propeptide — C-terminal propeptide; it reads DEAAGGLRQH…GVDIGPVCFL (246 aa). Residues 625–859 enclose the Fibrillar collagen NC1 domain; it reads VEVDATLKSL…GVDIGPVCFL (235 aa). Intrachain disulfides connect cysteine 655/cysteine 687, cysteine 695/cysteine 857, and cysteine 765/cysteine 810. The Ca(2+) site is built by aspartate 673, asparagine 675, glutamine 676, cysteine 678, and aspartate 681. N-linked (GlcNAc...) asparagine glycosylation occurs at asparagine 760.

This sequence belongs to the fibrillar collagen family. Homotrimers of alpha 1(II) chains. In terms of processing, contains mostly 4-hydroxyproline. Prolines at the third position of the tripeptide repeating unit (G-X-P) are 4-hydroxylated in some or all of the chains. Post-translationally, contains 3-hydroxyproline at a few sites. This modification occurs on the first proline residue in the sequence motif Gly-Pro-Hyp, where Hyp is 4-hydroxyproline. Lysine residues at the third position of the tripeptide repeating unit (G-X-Y) are 5-hydroxylated in some or all of the chains. In terms of processing, O-glycosylated on hydroxylated lysine residues. The O-linked glycan consists of a Glc-Gal disaccharide.

Its subcellular location is the secreted. The protein localises to the extracellular space. It localises to the extracellular matrix. Functionally, type II collagen is specific for cartilaginous tissues. It is essential for the normal embryonic development of the skeleton, for linear growth and for the ability of cartilage to resist compressive forces. This is Collagen alpha-1(II) chain from Gallus gallus (Chicken).